Consider the following 134-residue polypeptide: Large ribosomal subunit protein uL16c (134 aa).

Belongs to the universal ribosomal protein uL16 family. In terms of assembly, part of the 50S ribosomal subunit.

It is found in the plastid. It localises to the chloroplast. The protein is Large ribosomal subunit protein uL16c of Oltmannsiellopsis viridis (Marine flagellate).